The sequence spans 229 residues: Flagellar L-ring protein (229 aa).

An N-terminal signal peptide occupies residues 1 to 18; that stretch reads MANKWRCSIALAVLSLTG. The N-palmitoyl cysteine moiety is linked to residue C19. A lipid anchor (S-diacylglycerol cysteine) is attached at C19.

This sequence belongs to the FlgH family. As to quaternary structure, the basal body constitutes a major portion of the flagellar organelle and consists of four rings (L,P,S, and M) mounted on a central rod.

Its subcellular location is the cell outer membrane. It localises to the bacterial flagellum basal body. In terms of biological role, assembles around the rod to form the L-ring and probably protects the motor/basal body from shearing forces during rotation. The protein is Flagellar L-ring protein (flgH) of Photorhabdus laumondii subsp. laumondii (strain DSM 15139 / CIP 105565 / TT01) (Photorhabdus luminescens subsp. laumondii).